Consider the following 108-residue polypeptide: Large ribosomal subunit protein bL31B (108 aa).

Residues 88 to 108 are disordered; that stretch reads AAVEEAPAVKSKKKAPIKKKK. Over residues 97-108 the composition is skewed to basic residues; that stretch reads KSKKKAPIKKKK.

Belongs to the bacterial ribosomal protein bL31 family. Type B subfamily. In terms of assembly, part of the 50S ribosomal subunit.

The sequence is that of Large ribosomal subunit protein bL31B from Chlamydia abortus (strain DSM 27085 / S26/3) (Chlamydophila abortus).